Consider the following 393-residue polypeptide: Methylthioribose kinase (393 aa).

Residues asparagine 38, lysine 53, and 107 to 109 (EDL) contribute to the ATP site. Aspartate 225 contacts substrate. 242–244 (DPE) lines the ATP pocket. Residue arginine 332 participates in substrate binding.

It belongs to the methylthioribose kinase family. Homodimer.

The catalysed reaction is 5-(methylsulfanyl)-D-ribose + ATP = 5-(methylsulfanyl)-alpha-D-ribose 1-phosphate + ADP + H(+). It participates in amino-acid biosynthesis; L-methionine biosynthesis via salvage pathway; S-methyl-5-thio-alpha-D-ribose 1-phosphate from S-methyl-5'-thioadenosine (hydrolase route): step 2/2. In terms of biological role, catalyzes the phosphorylation of methylthioribose into methylthioribose-1-phosphate. This chain is Methylthioribose kinase, found in Bacillus cereus (strain ATCC 14579 / DSM 31 / CCUG 7414 / JCM 2152 / NBRC 15305 / NCIMB 9373 / NCTC 2599 / NRRL B-3711).